The chain runs to 391 residues: S-adenosylmethionine synthase (391 aa).

Residue H14 coordinates ATP. D16 lines the Mg(2+) pocket. E42 contacts K(+). L-methionine is bound by residues E55 and Q98. Residues 98 to 108 are flexible loop; that stretch reads QSADIAMGVDE. ATP-binding positions include 172-174, 238-239, D247, 253-254, A270, and K274; these read DGK, RF, and RK. D247 serves as a coordination point for L-methionine. An L-methionine-binding site is contributed by K278.

Belongs to the AdoMet synthase family. As to quaternary structure, homotetramer; dimer of dimers. Mg(2+) is required as a cofactor. It depends on K(+) as a cofactor.

The protein localises to the cytoplasm. It catalyses the reaction L-methionine + ATP + H2O = S-adenosyl-L-methionine + phosphate + diphosphate. It participates in amino-acid biosynthesis; S-adenosyl-L-methionine biosynthesis; S-adenosyl-L-methionine from L-methionine: step 1/1. Functionally, catalyzes the formation of S-adenosylmethionine (AdoMet) from methionine and ATP. The overall synthetic reaction is composed of two sequential steps, AdoMet formation and the subsequent tripolyphosphate hydrolysis which occurs prior to release of AdoMet from the enzyme. This is S-adenosylmethionine synthase from Clostridium acetobutylicum (strain ATCC 824 / DSM 792 / JCM 1419 / IAM 19013 / LMG 5710 / NBRC 13948 / NRRL B-527 / VKM B-1787 / 2291 / W).